The primary structure comprises 141 residues: Fluoride-specific ion channel FluC 1 (141 aa).

Helical transmembrane passes span 12 to 32 (LYALIAAGSVIGGCARYLVGV), 44 to 64 (WATLFVNVTGSFVIGFYAAIA), 79 to 99 (FVMTGICGGYTTFSGFSLETF), and 107 to 127 (ALAALINLGVSPMSWLVAVWL). Na(+) contacts are provided by Gly86 and Thr89.

Belongs to the fluoride channel Fluc/FEX (TC 1.A.43) family.

It localises to the cell inner membrane. The catalysed reaction is fluoride(in) = fluoride(out). Its activity is regulated as follows. Na(+) is not transported, but it plays an essential structural role and its presence is essential for fluoride channel function. Its function is as follows. Fluoride-specific ion channel. Important for reducing fluoride concentration in the cell, thus reducing its toxicity. In Rhodopseudomonas palustris (strain BisB18), this protein is Fluoride-specific ion channel FluC 1.